The following is a 156-amino-acid chain: Cytochrome c-type biogenesis protein CcmE 1 (156 aa).

The Cytoplasmic portion of the chain corresponds to 1-8; the sequence is MNATRKQR. The helical; Signal-anchor for type II membrane protein transmembrane segment at 9–29 threads the bilayer; that stretch reads LCLVIGVLAAAALAVTLIVFA. At 30–156 the chain is on the periplasmic side; the sequence is LQRNMSYLFT…ATAAPLTTPR (127 aa). Heme contacts are provided by H123 and Y127.

This sequence belongs to the CcmE/CycJ family.

The protein localises to the cell inner membrane. Heme chaperone required for the biogenesis of c-type cytochromes. Transiently binds heme delivered by CcmC and transfers the heme to apo-cytochromes in a process facilitated by CcmF and CcmH. The sequence is that of Cytochrome c-type biogenesis protein CcmE 1 from Xanthomonas oryzae pv. oryzae (strain MAFF 311018).